Consider the following 381-residue polypeptide: Chymosin (381 aa).

Positions 1-16 (MRCLVVLLAVFALSQG) are cleaved as a signal peptide. Positions 17-58 (AEITRIPLYKGKSLRKALKEHGLLEDFLQKQQYGISSKYSGF) are cleaved as a propeptide — activation peptide. The 305-residue stretch at 74 to 378 (YFGKIYLGTP…DRANNLVGLA (305 aa)) folds into the Peptidase A1 domain. Residue aspartate 92 is part of the active site. 2 disulfides stabilise this stretch: cysteine 105/cysteine 110 and cysteine 265/cysteine 269. Residue aspartate 274 is part of the active site. A disulfide bridge connects residues cysteine 308 and cysteine 341.

Belongs to the peptidase A1 family. In terms of assembly, monomer.

It catalyses the reaction Broad specificity similar to that of pepsin A. Clots milk by cleavage of a single 104-Ser-Phe-|-Met-Ala-107 bond in kappa-chain of casein.. Chymosin is synthesized in the mucosa of the abomasum (fourth stomach) of young (unweaned) ruminants. The enzyme hydrolyzes casein to paracasein. The protein is Chymosin (CYM) of Bos taurus (Bovine).